Here is a 370-residue protein sequence, read N- to C-terminus: 3-dehydroquinate synthase (370 aa).

Residues 107–111, 131–132, lysine 144, and lysine 153 contribute to the NAD(+) site; these read GVIGD and TS. Glutamate 186, histidine 249, and histidine 267 together coordinate Zn(2+).

Belongs to the sugar phosphate cyclases superfamily. Dehydroquinate synthase family. Co(2+) is required as a cofactor. Zn(2+) serves as cofactor. It depends on NAD(+) as a cofactor.

The protein localises to the cytoplasm. It carries out the reaction 7-phospho-2-dehydro-3-deoxy-D-arabino-heptonate = 3-dehydroquinate + phosphate. Its pathway is metabolic intermediate biosynthesis; chorismate biosynthesis; chorismate from D-erythrose 4-phosphate and phosphoenolpyruvate: step 2/7. Its function is as follows. Catalyzes the conversion of 3-deoxy-D-arabino-heptulosonate 7-phosphate (DAHP) to dehydroquinate (DHQ). In Roseobacter denitrificans (strain ATCC 33942 / OCh 114) (Erythrobacter sp. (strain OCh 114)), this protein is 3-dehydroquinate synthase.